The primary structure comprises 58 residues: U8-ctenitoxin-Pk1a (58 aa).

5 cysteine pairs are disulfide-bonded: cysteine 2-cysteine 16, cysteine 9-cysteine 22, cysteine 15-cysteine 40, cysteine 24-cysteine 38, and cysteine 48-cysteine 55.

As to expression, expressed by the venom gland.

Its subcellular location is the secreted. Its function is as follows. No toxic effects on mice at dose levels of 5 ug per mouse. May be toxic to insects. The chain is U8-ctenitoxin-Pk1a from Phoneutria keyserlingi (Brazilian wandering spider).